The following is an 82-amino-acid chain: Sec-independent protein translocase protein TatA (82 aa).

A helical membrane pass occupies residues 1 to 21; sequence MGGISVWQLLIIAVIVVLLFG. Residues 41–82 form a disordered region; the sequence is KAMSEDEPAKKDDKDADFEPKSLEEQQKKEAAPESKKDKEQA. The span at 42–82 shows a compositional bias: basic and acidic residues; that stretch reads AMSEDEPAKKDDKDADFEPKSLEEQQKKEAAPESKKDKEQA.

The protein belongs to the TatA/E family. In terms of assembly, the Tat system comprises two distinct complexes: a TatABC complex, containing multiple copies of TatA, TatB and TatC subunits, and a separate TatA complex, containing only TatA subunits. Substrates initially bind to the TatABC complex, which probably triggers association of the separate TatA complex to form the active translocon.

It localises to the cell inner membrane. In terms of biological role, part of the twin-arginine translocation (Tat) system that transports large folded proteins containing a characteristic twin-arginine motif in their signal peptide across membranes. TatA could form the protein-conducting channel of the Tat system. The chain is Sec-independent protein translocase protein TatA from Vibrio campbellii (strain ATCC BAA-1116).